Here is a 494-residue protein sequence, read N- to C-terminus: Glutamate--tRNA ligase (494 aa).

The short motif at 9 to 19 is the 'HIGH' region element; sequence PSPTGPLHIGS. The 'KMSKS' region motif lies at 249–253; sequence KLSKR. Position 252 (Lys252) interacts with ATP.

It belongs to the class-I aminoacyl-tRNA synthetase family. Glutamate--tRNA ligase type 1 subfamily. As to quaternary structure, monomer.

It is found in the cytoplasm. The enzyme catalyses tRNA(Glu) + L-glutamate + ATP = L-glutamyl-tRNA(Glu) + AMP + diphosphate. Functionally, catalyzes the attachment of glutamate to tRNA(Glu) in a two-step reaction: glutamate is first activated by ATP to form Glu-AMP and then transferred to the acceptor end of tRNA(Glu). This Azobacteroides pseudotrichonymphae genomovar. CFP2 protein is Glutamate--tRNA ligase.